We begin with the raw amino-acid sequence, 134 residues long: ATP synthase epsilon chain (134 aa).

The tract at residues asparagine 100–valine 134 is disordered. A compositionally biased stretch (basic and acidic residues) spans glutamate 110–arginine 120.

This sequence belongs to the ATPase epsilon chain family. F-type ATPases have 2 components, CF(1) - the catalytic core - and CF(0) - the membrane proton channel. CF(1) has five subunits: alpha(3), beta(3), gamma(1), delta(1), epsilon(1). CF(0) has three main subunits: a, b and c.

The protein localises to the cell inner membrane. In terms of biological role, produces ATP from ADP in the presence of a proton gradient across the membrane. The chain is ATP synthase epsilon chain from Sulfurihydrogenibium sp. (strain YO3AOP1).